We begin with the raw amino-acid sequence, 393 residues long: Xyloside xylosyltransferase 1 (393 aa).

Residues 1-23 (MGLLRGGLPCARAMARLGAVRSH) lie on the Cytoplasmic side of the membrane. The chain crosses the membrane as a helical; Signal-anchor for type II membrane protein span at residues 24–44 (YCALLLAAALAVCAFYYLGSG). Residues 45-393 (RETFSSATKR…GNCNTPIPED (349 aa)) are Lumenal-facing. 104 to 106 (MFT) lines the UDP-alpha-D-xylose pocket. A Mn(2+)-binding site is contributed by aspartate 226. Residue leucine 227 participates in UDP-alpha-D-xylose binding. Residue aspartate 228 participates in Mn(2+) binding. Residues 263 to 266 (HTFW) form an interaction with target proteins region. UDP-alpha-D-xylose-binding residues include serine 290, leucine 328, and glutamine 331. A glycoprotein-binding residues include glutamine 331 and tryptophan 360. 2 disulfide bridges follow: cysteine 350/cysteine 375 and cysteine 357/cysteine 386. Residue histidine 383 participates in Mn(2+) binding. An a glycoprotein-binding site is contributed by asparagine 385.

Belongs to the glycosyltransferase 8 family. As to quaternary structure, homodimer. Dimer formation may be essential for the retention in endoplasmic reticulum. Mg(2+) is required as a cofactor. Requires Mn(2+) as cofactor.

Its subcellular location is the endoplasmic reticulum membrane. The enzyme catalyses 3-O-[alpha-D-xylosyl-(1-&gt;3)-beta-D-glucosyl]-L-seryl-[EGF-like domain protein] + UDP-alpha-D-xylose = 3-O-[alpha-D-xylosyl-(1-&gt;3)-alpha-D-xylosyl-(1-&gt;3)-beta-D-glucosyl]-L-seryl-[EGF-like domain protein] + UDP + H(+). Its function is as follows. Alpha-1,3-xylosyltransferase, which elongates the O-linked xylose-glucose disaccharide attached to EGF-like repeats in the extracellular domain of target proteins by catalyzing the addition of the second xylose. Known targets include Notch proteins and coagulation factors, such as F9. This Homo sapiens (Human) protein is Xyloside xylosyltransferase 1 (XXYLT1).